The primary structure comprises 1057 residues: Carbamoyl phosphate synthase large chain (1057 aa).

Residues 1 to 401 (MPKRNDIKTI…SLLKAIRSLE (401 aa)) are carboxyphosphate synthetic domain. ATP-binding residues include arginine 129, arginine 169, glycine 175, glycine 176, lysine 208, isoleucine 210, glutamate 215, glycine 241, isoleucine 242, histidine 243, glutamine 284, and glutamate 298. The 195-residue stretch at 133-327 (RTLMNDLNVP…IAKLAAKIAV (195 aa)) folds into the ATP-grasp 1 domain. Mg(2+) contacts are provided by glutamine 284, glutamate 298, and asparagine 300. 3 residues coordinate Mn(2+): glutamine 284, glutamate 298, and asparagine 300. Positions 402 to 546 (YGVHHLGLPN…YGTYETENES (145 aa)) are oligomerization domain. Residues 547-929 (IVTDKEKILV…ALFKGLTGSG (383 aa)) are carbamoyl phosphate synthetic domain. Positions 671–861 (EALLRKINVP…MAQLAMRAII (191 aa)) constitute an ATP-grasp 2 domain. ATP-binding residues include arginine 707, arginine 746, leucine 748, glutamate 752, glycine 777, valine 778, histidine 779, serine 780, glutamine 820, and glutamate 832. Glutamine 820, glutamate 832, and asparagine 834 together coordinate Mg(2+). Mn(2+)-binding residues include glutamine 820, glutamate 832, and asparagine 834. The MGS-like domain maps to 930-1057 (VEVKDHGTVL…ESMTFTMRQM (128 aa)). The segment at 930–1057 (VEVKDHGTVL…ESMTFTMRQM (128 aa)) is allosteric domain.

It belongs to the CarB family. In terms of assembly, composed of two chains; the small (or glutamine) chain promotes the hydrolysis of glutamine to ammonia, which is used by the large (or ammonia) chain to synthesize carbamoyl phosphate. Tetramer of heterodimers (alpha,beta)4. Mg(2+) serves as cofactor. Mn(2+) is required as a cofactor.

The enzyme catalyses hydrogencarbonate + L-glutamine + 2 ATP + H2O = carbamoyl phosphate + L-glutamate + 2 ADP + phosphate + 2 H(+). The catalysed reaction is hydrogencarbonate + NH4(+) + 2 ATP = carbamoyl phosphate + 2 ADP + phosphate + 2 H(+). Its pathway is amino-acid biosynthesis; L-arginine biosynthesis; carbamoyl phosphate from bicarbonate: step 1/1. It functions in the pathway pyrimidine metabolism; UMP biosynthesis via de novo pathway; (S)-dihydroorotate from bicarbonate: step 1/3. Functionally, large subunit of the glutamine-dependent carbamoyl phosphate synthetase (CPSase). CPSase catalyzes the formation of carbamoyl phosphate from the ammonia moiety of glutamine, carbonate, and phosphate donated by ATP, constituting the first step of 2 biosynthetic pathways, one leading to arginine and/or urea and the other to pyrimidine nucleotides. The large subunit (synthetase) binds the substrates ammonia (free or transferred from glutamine from the small subunit), hydrogencarbonate and ATP and carries out an ATP-coupled ligase reaction, activating hydrogencarbonate by forming carboxy phosphate which reacts with ammonia to form carbamoyl phosphate. This is Carbamoyl phosphate synthase large chain from Staphylococcus aureus (strain MW2).